The chain runs to 161 residues: UPF0506 protein SJCHGC02965 (161 aa).

Residues 1-13 form the signal peptide; it reads QLLILCLVTVINS. Residues Asn15, Asn19, Asn31, Asn43, Asn47, Asn59, Asn63, Asn75, and Asn121 are each glycosylated (N-linked (GlcNAc...) asparagine). 3 disulfide bridges follow: Cys127/Cys141, Cys134/Cys145, and Cys140/Cys150.

It belongs to the UPF0506 family.

It localises to the secreted. This Schistosoma japonicum (Blood fluke) protein is UPF0506 protein SJCHGC02965.